Consider the following 481-residue polypeptide: Cysteine--tRNA ligase (481 aa).

A Zn(2+)-binding site is contributed by Cys29. Positions Pro31–Asn41 match the 'HIGH' region motif. Residues Cys209, His234, and Glu238 each contribute to the Zn(2+) site. A 'KMSKS' region motif is present at residues Lys267–Ser271. An ATP-binding site is contributed by Lys270.

It belongs to the class-I aminoacyl-tRNA synthetase family. As to quaternary structure, monomer. Requires Zn(2+) as cofactor.

The protein localises to the cytoplasm. The enzyme catalyses tRNA(Cys) + L-cysteine + ATP = L-cysteinyl-tRNA(Cys) + AMP + diphosphate. The polypeptide is Cysteine--tRNA ligase (Heliobacterium modesticaldum (strain ATCC 51547 / Ice1)).